A 35-amino-acid chain; its full sequence is UPF0387 membrane protein YohO (35 aa).

The chain crosses the membrane as a helical span at residues 6 to 26 (IGVIALFLFMALGGIGGVMLA).

Belongs to the UPF0387 family.

Its subcellular location is the cell inner membrane. This is UPF0387 membrane protein YohO from Shigella boydii serotype 4 (strain Sb227).